Here is a 196-residue protein sequence, read N- to C-terminus: Imidazoleglycerol-phosphate dehydratase (196 aa).

Belongs to the imidazoleglycerol-phosphate dehydratase family.

The protein resides in the cytoplasm. The catalysed reaction is D-erythro-1-(imidazol-4-yl)glycerol 3-phosphate = 3-(imidazol-4-yl)-2-oxopropyl phosphate + H2O. It participates in amino-acid biosynthesis; L-histidine biosynthesis; L-histidine from 5-phospho-alpha-D-ribose 1-diphosphate: step 6/9. The chain is Imidazoleglycerol-phosphate dehydratase from Caulobacter vibrioides (strain ATCC 19089 / CIP 103742 / CB 15) (Caulobacter crescentus).